The primary structure comprises 549 residues: Endoplasmic reticulum mannosyl-oligosaccharide 1,2-alpha-mannosidase (549 aa).

Residues 1 to 4 lie on the Cytoplasmic side of the membrane; sequence MKNS. A helical; Signal-anchor for type II membrane protein transmembrane segment spans residues 5–24; it reads VGISIATIVAIIAAIYYVPW. The Lumenal segment spans residues 25-354; the sequence is YEHFERKSPG…LLASGSTEGL (330 aa). N-linked (GlcNAc...) asparagine glycosylation is found at N96, N155, and N224. A disulfide bond links C340 and C385. Catalysis depends on E399, which acts as the Proton donor. Cysteines 468 and 471 form a disulfide. T525 is a binding site for Ca(2+).

It belongs to the glycosyl hydrolase 47 family. Homodimer. Ca(2+) is required as a cofactor.

It localises to the endoplasmic reticulum membrane. The catalysed reaction is N(4)-(alpha-D-Man-(1-&gt;2)-alpha-D-Man-(1-&gt;2)-alpha-D-Man-(1-&gt;3)-[alpha-D-Man-(1-&gt;2)-alpha-D-Man-(1-&gt;3)-[alpha-D-Man-(1-&gt;2)-alpha-D-Man-(1-&gt;6)]-alpha-D-Man-(1-&gt;6)]-beta-D-Man-(1-&gt;4)-beta-D-GlcNAc-(1-&gt;4)-beta-D-GlcNAc)-L-asparaginyl-[protein] (N-glucan mannose isomer 9A1,2,3B1,2,3) + 4 H2O = N(4)-(alpha-D-Man-(1-&gt;3)-[alpha-D-Man-(1-&gt;3)-[alpha-D-Man-(1-&gt;6)]-alpha-D-Man-(1-&gt;6)]-beta-D-Man-(1-&gt;4)-beta-D-GlcNAc-(1-&gt;4)-beta-D-GlcNAc)-L-asparaginyl-[protein] (N-glucan mannose isomer 5A1,2) + 4 beta-D-mannose. The enzyme catalyses N(4)-(alpha-D-Man-(1-&gt;2)-alpha-D-Man-(1-&gt;2)-alpha-D-Man-(1-&gt;3)-[alpha-D-Man-(1-&gt;3)-[alpha-D-Man-(1-&gt;2)-alpha-D-Man-(1-&gt;6)]-alpha-D-Man-(1-&gt;6)]-beta-D-Man-(1-&gt;4)-beta-D-GlcNAc-(1-&gt;4)-beta-D-GlcNAc)-L-asparaginyl-[protein] (N-glucan mannose isomer 8A1,2,3B1,3) + 3 H2O = N(4)-(alpha-D-Man-(1-&gt;3)-[alpha-D-Man-(1-&gt;3)-[alpha-D-Man-(1-&gt;6)]-alpha-D-Man-(1-&gt;6)]-beta-D-Man-(1-&gt;4)-beta-D-GlcNAc-(1-&gt;4)-beta-D-GlcNAc)-L-asparaginyl-[protein] (N-glucan mannose isomer 5A1,2) + 3 beta-D-mannose. The protein operates within protein modification; protein glycosylation. In terms of biological role, involved in glycoprotein quality control as it is important for the targeting of misfolded glycoproteins for degradation. It primarily trims a single alpha-1,2-linked mannose residue from Man(9)GlcNAc(2) to produce Man(8)GlcNAc(2), but at high enzyme concentrations it further trims the carbohydrates to Man(5)GlcNAc(2). This is Endoplasmic reticulum mannosyl-oligosaccharide 1,2-alpha-mannosidase (MNS1) from Saccharomyces cerevisiae (strain ATCC 204508 / S288c) (Baker's yeast).